Here is a 341-residue protein sequence, read N- to C-terminus: UDP-N-acetylenolpyruvoylglucosamine reductase (341 aa).

One can recognise an FAD-binding PCMH-type domain in the interval 19–191 (MAVRAAHFCQ…TAVRFRLSRR (173 aa)). The active site involves Arg-167. The active-site Proton donor is Ser-241. Glu-337 is a catalytic residue.

Belongs to the MurB family. FAD is required as a cofactor.

It is found in the cytoplasm. It catalyses the reaction UDP-N-acetyl-alpha-D-muramate + NADP(+) = UDP-N-acetyl-3-O-(1-carboxyvinyl)-alpha-D-glucosamine + NADPH + H(+). The protein operates within cell wall biogenesis; peptidoglycan biosynthesis. In terms of biological role, cell wall formation. The protein is UDP-N-acetylenolpyruvoylglucosamine reductase of Chromobacterium violaceum (strain ATCC 12472 / DSM 30191 / JCM 1249 / CCUG 213 / NBRC 12614 / NCIMB 9131 / NCTC 9757 / MK).